The sequence spans 340 residues: Phosphoribosylformylglycinamidine cyclo-ligase (340 aa).

Belongs to the AIR synthase family.

The protein localises to the cytoplasm. The catalysed reaction is 2-formamido-N(1)-(5-O-phospho-beta-D-ribosyl)acetamidine + ATP = 5-amino-1-(5-phospho-beta-D-ribosyl)imidazole + ADP + phosphate + H(+). It participates in purine metabolism; IMP biosynthesis via de novo pathway; 5-amino-1-(5-phospho-D-ribosyl)imidazole from N(2)-formyl-N(1)-(5-phospho-D-ribosyl)glycinamide: step 2/2. The polypeptide is Phosphoribosylformylglycinamidine cyclo-ligase (Streptococcus pyogenes serotype M18 (strain MGAS8232)).